The primary structure comprises 139 residues: Non-structural protein 1 (139 aa).

A DLNP; interaction with MAP1B motif is present at residues 136–139; sequence DLNP.

Belongs to the pneumovirus non-structural protein 1 family. As to quaternary structure, monomer. Homomultimer. Heteromultimer with NS2. Interacts with the matrix protein M. Interacts with host ELOC and CUL2; this interaction allows NS1 to form an active E3 ligase with ELOC and CUL2. Interacts with host IRF3; this interaction leads to the disrupted association of IRF3 with CREBBP and thus reduced binding of IRF3 to the IFN-beta promoter. Interacts with host MAVS; this interaction prevents MAVS binding to RIGI and inhibits signaling pathway leading to interferon production. Interacts with host MAP1B/microtubule-associated protein 1B. Interacts with host TRIM25 (via SPRY domain); this interaction suppresses RIGI ubiquitination and results in decreased interaction between RIGI and MAVS.

It is found in the host cytoplasm. Its subcellular location is the host mitochondrion. The protein resides in the host nucleus. Functionally, plays a major role in antagonizing the type I IFN-mediated antiviral response by degrading or inhibiting multiple cellular factors required for either IFN induction or response pathways. Acts cooperatively with NS2 to repress activation and nuclear translocation of host IFN-regulatory factor IRF3. Also disrupts the association of IRF3 with CREBBP. Interacts with host mitochondrial-associated membrane (MAM) MAVS and prevents the interaction with RIGI. Interacts with TRIM25 to suppress TRIM25-mediated RIGI ubiquitination and thereby RIGI-MAVS interaction. Together with NS2, participates in the proteasomal degradation of host STAT2, IRF3, IRF7, TBK1 and RIGI through a NS-degradasome involving CUL2 and Elongin-C. The degradasome requires an intact mitochondrial MAVS. Decreases the levels of host TRAF3 and IKBKE/IKK-epsilon. As functions other than disruptions of the type I IFN-mediated antiviral signaling pathways, induces host SOCS1 and SOCS3 expression. Suppresses premature apoptosis by an NF-kappa-B-dependent, interferon-independent mechanism and thus facilitates virus growth. Additionally, NS1 may serve some inhibitory role in viral transcription and RNA replication. Suppresses proliferation and activation of host CD103+ CD8+ cytotoxic T-lymphocytes and Th17 helper T-lymphocytes. The sequence is that of Non-structural protein 1 (1C) from Homo sapiens (Human).